Here is a 246-residue protein sequence, read N- to C-terminus: 2,3-bisphosphoglycerate-dependent phosphoglycerate mutase (246 aa).

Substrate-binding positions include 9–16 (RHGQSAWN), 22–23 (TG), arginine 61, 88–91 (ERHY), lysine 99, 115–116 (RR), and 181–182 (GN). Histidine 10 acts as the Tele-phosphohistidine intermediate in catalysis. The Proton donor/acceptor role is filled by glutamate 88.

The protein belongs to the phosphoglycerate mutase family. BPG-dependent PGAM subfamily.

The catalysed reaction is (2R)-2-phosphoglycerate = (2R)-3-phosphoglycerate. The protein operates within carbohydrate degradation; glycolysis; pyruvate from D-glyceraldehyde 3-phosphate: step 3/5. Catalyzes the interconversion of 2-phosphoglycerate and 3-phosphoglycerate. This is 2,3-bisphosphoglycerate-dependent phosphoglycerate mutase from Bifidobacterium longum (strain DJO10A).